The primary structure comprises 752 residues: DNA ligase (752 aa).

NAD(+) contacts are provided by residues 48–52 (DADYD), 97–98 (SL), and glutamate 131. Residue lysine 133 is the N6-AMP-lysine intermediate of the active site. NAD(+) contacts are provided by arginine 154, glutamate 189, lysine 305, and lysine 329. Residues cysteine 434, cysteine 437, cysteine 452, and cysteine 458 each contribute to the Zn(2+) site. The segment covering 599 to 615 (ADEGRRASLQPQRDKAW) has biased composition (basic and acidic residues). The tract at residues 599–618 (ADEGRRASLQPQRDKAWADT) is disordered. A BRCT domain is found at 673–752 (ATQSAVAGLT…EQWLDRIGDA (80 aa)).

It belongs to the NAD-dependent DNA ligase family. LigA subfamily. Mg(2+) serves as cofactor. Mn(2+) is required as a cofactor.

It carries out the reaction NAD(+) + (deoxyribonucleotide)n-3'-hydroxyl + 5'-phospho-(deoxyribonucleotide)m = (deoxyribonucleotide)n+m + AMP + beta-nicotinamide D-nucleotide.. Its function is as follows. DNA ligase that catalyzes the formation of phosphodiester linkages between 5'-phosphoryl and 3'-hydroxyl groups in double-stranded DNA using NAD as a coenzyme and as the energy source for the reaction. It is essential for DNA replication and repair of damaged DNA. The chain is DNA ligase from Jannaschia sp. (strain CCS1).